We begin with the raw amino-acid sequence, 81 residues long: ATP synthase subunit c, chloroplastic (81 aa).

The next 2 membrane-spanning stretches (helical) occupy residues 3-23 (PIIC…GAIG) and 57-77 (LAFM…IIFA).

Belongs to the ATPase C chain family. In terms of assembly, F-type ATPases have 2 components, F(1) - the catalytic core - and F(0) - the membrane proton channel. F(1) has five subunits: alpha(3), beta(3), gamma(1), delta(1), epsilon(1). F(0) has four main subunits: a(1), b(1), b'(1) and c(10-14). The alpha and beta chains form an alternating ring which encloses part of the gamma chain. F(1) is attached to F(0) by a central stalk formed by the gamma and epsilon chains, while a peripheral stalk is formed by the delta, b and b' chains.

It is found in the plastid. The protein localises to the chloroplast thylakoid membrane. F(1)F(0) ATP synthase produces ATP from ADP in the presence of a proton or sodium gradient. F-type ATPases consist of two structural domains, F(1) containing the extramembraneous catalytic core and F(0) containing the membrane proton channel, linked together by a central stalk and a peripheral stalk. During catalysis, ATP synthesis in the catalytic domain of F(1) is coupled via a rotary mechanism of the central stalk subunits to proton translocation. In terms of biological role, key component of the F(0) channel; it plays a direct role in translocation across the membrane. A homomeric c-ring of between 10-14 subunits forms the central stalk rotor element with the F(1) delta and epsilon subunits. In Euglena gracilis, this protein is ATP synthase subunit c, chloroplastic.